The primary structure comprises 82 residues: KKEKEQGCYGDFIECLKLYDKEENGTMMLAELQHALLALGESLDDEQVETLFADCMDPEDDEGFIPYSQFVQRLMSDPVVFD.

The EF-hand domain maps to 7–42 (GCYGDFIECLKLYDKEENGTMMLAELQHALLALGES).

In terms of assembly, myosin is a hexamer of 2 heavy chains and 4 light chains.

This Drosophila sechellia (Fruit fly) protein is Myosin light chain alkali (Mlc1).